Here is a 629-residue protein sequence, read N- to C-terminus: 1-deoxy-D-xylulose-5-phosphate synthase (629 aa).

Residues H72 and 113 to 115 (GHA) each bind thiamine diphosphate. A Mg(2+)-binding site is contributed by D144. Residues 145–146 (GA), N174, Y287, and E370 each bind thiamine diphosphate. N174 is a Mg(2+) binding site.

This sequence belongs to the transketolase family. DXPS subfamily. In terms of assembly, homodimer. Mg(2+) serves as cofactor. Thiamine diphosphate is required as a cofactor.

It carries out the reaction D-glyceraldehyde 3-phosphate + pyruvate + H(+) = 1-deoxy-D-xylulose 5-phosphate + CO2. Its pathway is metabolic intermediate biosynthesis; 1-deoxy-D-xylulose 5-phosphate biosynthesis; 1-deoxy-D-xylulose 5-phosphate from D-glyceraldehyde 3-phosphate and pyruvate: step 1/1. In terms of biological role, catalyzes the acyloin condensation reaction between C atoms 2 and 3 of pyruvate and glyceraldehyde 3-phosphate to yield 1-deoxy-D-xylulose-5-phosphate (DXP). The polypeptide is 1-deoxy-D-xylulose-5-phosphate synthase (Prochlorococcus marinus (strain MIT 9312)).